Reading from the N-terminus, the 657-residue chain is Glycogen debranching enzyme (657 aa).

The active-site Nucleophile is Asp336. Residue Glu371 is the Proton donor of the active site. Positions 460-479 are disordered; the sequence is ANGEENRDGTNNNYSNNHGK.

The protein belongs to the glycosyl hydrolase 13 family.

The enzyme catalyses Hydrolysis of (1-&gt;6)-alpha-D-glucosidic linkages to branches with degrees of polymerization of three or four glucose residues in limit dextrin.. Its pathway is glycan degradation; glycogen degradation. Its function is as follows. Removes maltotriose and maltotetraose chains that are attached by 1,6-alpha-linkage to the limit dextrin main chain, generating a debranched limit dextrin. This is Glycogen debranching enzyme from Escherichia coli O17:K52:H18 (strain UMN026 / ExPEC).